The following is a 452-amino-acid chain: Chloride/fluoride channel protein (452 aa).

Helical transmembrane passes span 23-43 (WLAL…LFLL), 57-77 (WVIW…HLIG), 97-117 (IVPL…HLFG), 160-180 (FASV…VLAI), 188-208 (LFPC…WGVV), 222-242 (LWSV…GLLF), 264-284 (PFAG…NHYI), 315-337 (VFTV…FYIG), 344-364 (LAPL…VAVF), and 386-408 (IAPL…GIYH).

Belongs to the chloride channel (TC 2.A.49) family.

It localises to the cell membrane. Functionally, transports chloride and fluoride with similar efficiency. The sequence is that of Chloride/fluoride channel protein (eriC) from Pseudomonas syringae pv. tomato (strain ATCC BAA-871 / DC3000).